Here is a 168-residue protein sequence, read N- to C-terminus: Disulfide bond formation protein B (168 aa).

Topologically, residues 1–13 (MFLTYFDAMPRRV) are cytoplasmic. The chain crosses the membrane as a helical span at residues 14–30 (LALVSLACVALLAFGLY). The Periplasmic portion of the chain corresponds to 31–48 (LQHVVGLEPCPMCIVQRY). Cysteine 40 and cysteine 43 form a disulfide bridge. The helical transmembrane segment at 49-64 (ALVLVAVVAGITAVAK) threads the bilayer. Residues 65–70 (SRGLLI) lie on the Cytoplasmic side of the membrane. Residues 71 to 88 (TGSGLLVLLSGFGAFVAA) traverse the membrane as a helical segment. At 89–144 (RQSFLQWYPPEVASCGRDFYGMIETFPLKRAIPMIFKGSGDCTKIDWTFLGLSIAN) the chain is on the periplasmic side. Cysteines 103 and 130 form a disulfide. The helical transmembrane segment at 145 to 163 (WSFLCFVAIALVGLVLITR) threads the bilayer. The Cytoplasmic portion of the chain corresponds to 164–168 (LARQR).

This sequence belongs to the DsbB family.

The protein resides in the cell inner membrane. Functionally, required for disulfide bond formation in some periplasmic proteins. Acts by oxidizing the DsbA protein. The chain is Disulfide bond formation protein B from Polaromonas sp. (strain JS666 / ATCC BAA-500).